The sequence spans 649 residues: V-type ATP synthase subunit I (649 aa).

7 helical membrane-spanning segments follow: residues Phe-312 to Phe-332, Phe-360 to Val-380, Phe-453 to Gly-473, Ile-485 to Val-505, Gly-520 to Ile-540, Val-556 to Val-576, and Ile-593 to Ile-613.

The protein belongs to the V-ATPase 116 kDa subunit family.

It is found in the cell membrane. Its function is as follows. Produces ATP from ADP in the presence of a proton gradient across the membrane. This chain is V-type ATP synthase subunit I (atpI), found in Chlamydia trachomatis serovar D (strain ATCC VR-885 / DSM 19411 / UW-3/Cx).